A 479-amino-acid chain; its full sequence is HSPB1-associated protein 1 (479 aa).

The disordered stretch occupies residues 1 to 25 (MEAGCEGSSPQTLGERTMGEEGERV). Residues 88–208 (ETECSYVDAT…EDTPFLYPTR (121 aa)) are interaction with HSPB1. Positions 124-288 (WAYADYKYFV…HLARVEEAVT (165 aa)) constitute a JmjC domain. Residues 347 to 412 (PRANGEEPGV…GDSQECTSRN (66 aa)) are disordered. Positions 356 to 369 (VQEHMEVEQARDPS) are enriched in basic and acidic residues.

Interacts with CRYAB and HSPB1. Widely expressed. Highly expressed by Sertoli cells in testis (at protein level).

Its subcellular location is the cytoplasm. Its function is as follows. May play a role in cellular stress response. This chain is HSPB1-associated protein 1 (Hspbap1), found in Rattus norvegicus (Rat).